The following is a 154-amino-acid chain: uncharacterized protein (154 aa).

Residues 1–37 are disordered; it reads MDNLKEKPLSYNINNNNLNNNNNNNNNNNNNNNNINN. Over residues 12 to 37 the composition is skewed to low complexity; it reads NINNNNLNNNNNNNNNNNNNNNNINN. Asn-82 carries N-linked (GlcNAc...) asparagine glycosylation. A helical transmembrane segment spans residues 116–136; the sequence is IIITTIVVLLMIAVSLGLILA. Residue Asn-149 is glycosylated (N-linked (GlcNAc...) asparagine).

The protein localises to the membrane. This is an uncharacterized protein from Dictyostelium discoideum (Social amoeba).